We begin with the raw amino-acid sequence, 157 residues long: Regulator of Ty1 transposition protein 102 (157 aa).

At Ser77 the chain carries Phosphoserine. A disordered region spans residues 95–157 (SLMTSHTKGD…TKESKDVKMN (63 aa)). Residues 96-116 (LMTSHTKGDTSKATGAPSANQ) are compositionally biased toward polar residues. Phosphoserine is present on Ser122. Residues 147–157 (NTKESKDVKMN) are compositionally biased toward basic and acidic residues.

In terms of assembly, interacts with STH1 and SWI3. Component of the two forms of the RSC complex composed of at least either RSC1 or RSC2, and ARP7, ARP9, LDB7, NPL6, RSC3, RSC30, RSC4, RSC58, RSC6, RSC8, RSC9, SFH1, STH1, HTL1 and probably RTT102. The complexes interact with histone and histone variant components of centromeric chromatin. Probable additional component of the SWI/SNF global transcription activator complex. The 1.14 MDa SWI/SNF complex is composed of 11 different subunits: one copy each of SWI1, SNF2/SWI2, SNF5, SNF12/SWP73, ARP7/SWP61, ARP9/SWP59; two copies each of SWI3, SNF6, SNF11, SWP82; and three copies of TAF14/SWP29.

The protein localises to the nucleus. Probable component of the chromatin structure-remodeling complex (RSC) which is involved in transcription regulation and nucleosome positioning. RSC is responsible for the transfer of a histone octamer from a nucleosome core particle to naked DNA. The reaction requires ATP and involves an activated RSC-nucleosome intermediate. Remodeling reaction also involves DNA translocation, DNA twist and conformational change. As a reconfigurer of centromeric and flanking nucleosomes, RSC complex is required both for proper kinetochore function in chromosome segregation and, via a PKC1-dependent signaling pathway, for organization of the cellular cytoskeleton. Probable component of the SWI/SNF complex, an ATP-dependent chromatin-remodeling complex, is required for the positive and negative regulation of gene expression of a large number of genes. It changes chromatin structure by altering DNA-histone contacts within a nucleosome, leading eventually to a change in nucleosome position, thus facilitating or repressing binding of gene-specific transcription factors. The sequence is that of Regulator of Ty1 transposition protein 102 (RTT102) from Saccharomyces cerevisiae (strain ATCC 204508 / S288c) (Baker's yeast).